Here is a 159-residue protein sequence, read N- to C-terminus: Insertion element IS136 uncharacterized 16.9 kDa protein (159 aa).

The segment covering 126–142 (RSFVSPSSSTPSTARSS) has biased composition (low complexity). The disordered stretch occupies residues 126–159 (RSFVSPSSSTPSTARSSPGRPLPMQAFPAQTCAT).

This Agrobacterium tumefaciens (strain T37) protein is Insertion element IS136 uncharacterized 16.9 kDa protein.